Here is a 73-residue protein sequence, read N- to C-terminus: UPF0346 protein SH1485 (73 aa).

The protein belongs to the UPF0346 family.

This chain is UPF0346 protein SH1485, found in Staphylococcus haemolyticus (strain JCSC1435).